The sequence spans 370 residues: 3,7-dimethylxanthine N-methyltransferase CkTbS (370 aa).

Tyr24 is a binding site for S-adenosyl-L-homocysteine. Thr31 contacts theobromine. Cys67, Asn72, Asp104, Leu105, Ser139, and Phe140 together coordinate S-adenosyl-L-homocysteine. The theobromine site is built by Tyr157, His160, and Trp161. Asn178 contributes to the Mg(2+) binding site. His226 serves as a coordination point for theobromine. Residues Asp264, Phe266, and Asn267 each contribute to the Mg(2+) site. Position 322 (Phe322) interacts with theobromine.

The protein belongs to the methyltransferase superfamily. Type-7 methyltransferase family. Mg(2+) is required as a cofactor.

It carries out the reaction 7-methylxanthine + S-adenosyl-L-methionine = theobromine + S-adenosyl-L-homocysteine + H(+). It participates in alkaloid biosynthesis. In terms of biological role, involved in the biosynthesis of caffeine in cv. Puer. Involved in the biosynthesis of theacrine in cv. Kucha, a caffeine-like xanthine alkaloid with diverse beneficial biological activities including anti-depressive, sedative, and hypnotic activities, improving learning and memory, increasing exercise activity, and preventing nonalcoholic fatty liver disease. Catalyzes the conversion of 7-methylxanthine (7mX) to theobromine but not able to convert paraxanthine to caffeine. This is 3,7-dimethylxanthine N-methyltransferase CkTbS from Camellia sinensis var. assamica (Assam tea).